Consider the following 242-residue polypeptide: Type III pantothenate kinase (242 aa).

ATP is bound at residue 5 to 12; it reads DLGNTRLK. Residues Tyr-94 and 100–103 each bind substrate; that span reads GCDR. The active-site Proton acceptor is the Asp-102. Thr-124 serves as a coordination point for ATP. Residue Thr-175 participates in substrate binding.

This sequence belongs to the type III pantothenate kinase family. Homodimer. It depends on NH4(+) as a cofactor. K(+) is required as a cofactor.

It is found in the cytoplasm. The catalysed reaction is (R)-pantothenate + ATP = (R)-4'-phosphopantothenate + ADP + H(+). Its pathway is cofactor biosynthesis; coenzyme A biosynthesis; CoA from (R)-pantothenate: step 1/5. In terms of biological role, catalyzes the phosphorylation of pantothenate (Pan), the first step in CoA biosynthesis. The sequence is that of Type III pantothenate kinase from Psychrobacter arcticus (strain DSM 17307 / VKM B-2377 / 273-4).